The chain runs to 593 residues: NADH-quinone oxidoreductase subunit C/D (593 aa).

The tract at residues 1 to 184 (MTADNAIFIP…DPYSLTLAKQ (184 aa)) is NADH dehydrogenase I subunit C. The segment at 208 to 593 (DYMFLNLGPN…IDFVMADVDR (386 aa)) is NADH dehydrogenase I subunit D.

It in the N-terminal section; belongs to the complex I 30 kDa subunit family. This sequence in the C-terminal section; belongs to the complex I 49 kDa subunit family. NDH-1 is composed of 13 different subunits. Subunits NuoB, CD, E, F, and G constitute the peripheral sector of the complex.

It is found in the cell inner membrane. It catalyses the reaction a quinone + NADH + 5 H(+)(in) = a quinol + NAD(+) + 4 H(+)(out). In terms of biological role, NDH-1 shuttles electrons from NADH, via FMN and iron-sulfur (Fe-S) centers, to quinones in the respiratory chain. The immediate electron acceptor for the enzyme in this species is believed to be ubiquinone. Couples the redox reaction to proton translocation (for every two electrons transferred, four hydrogen ions are translocated across the cytoplasmic membrane), and thus conserves the redox energy in a proton gradient. The protein is NADH-quinone oxidoreductase subunit C/D of Pseudomonas putida (strain ATCC 47054 / DSM 6125 / CFBP 8728 / NCIMB 11950 / KT2440).